A 576-amino-acid chain; its full sequence is Laccase-1 (576 aa).

Positions 1–19 (MARTTFLVSVSLFVSAVLA) are cleaved as a signal peptide. 2 Plastocyanin-like domains span residues 21–145 (TVEY…LVIY) and 157–304 (VDDE…LVYE). The N-linked (GlcNAc...) asparagine glycan is linked to Asn41. His82, His84, His127, and His129 together coordinate Cu cation. Cys103 and Cys562 are joined by a disulfide. N-linked (GlcNAc...) asparagine glycans are attached at residues Asn182, Asn228, Asn294, and Asn368. In terms of domain architecture, Plastocyanin-like 3 spans 376 to 576 (DESKLVPLEY…NWLKSNPGQL (201 aa)). Positions 471, 474, 476, 523, 524, 525, and 529 each coordinate Cu cation.

The protein belongs to the multicopper oxidase family. In terms of assembly, homodimer. Cu cation serves as cofactor. As to expression, in mycelia, at a lower level than LCC4.

It is found in the secreted. It carries out the reaction 4 hydroquinone + O2 = 4 benzosemiquinone + 2 H2O. In terms of biological role, lignin degradation and detoxification of lignin-derived products. This chain is Laccase-1 (LCC1), found in Thanatephorus cucumeris (Black scurf of potato).